Consider the following 520-residue polypeptide: RNA polymerase sigma factor sigA (520 aa).

A chloroplast-targeting transit peptide spans 1–66 (MTATPAVIGL…APATPKLTAV (66 aa)). The span at 37 to 49 (GGGGGGGGGGGGD) shows a compositional bias: gly residues. Disordered stretches follow at residues 37 to 57 (GGGGGGGGGGGGDAMSFAPPA), 87 to 117 (HHSSAAAALAPPPPPPPPPTPSPASRAAHAH), and 171 to 190 (SVSARQRRMSGRRRGRTKNG). Over residues 96–108 (APPPPPPPPPTPS) the composition is skewed to pro residues. Residues 175–187 (RQRRMSGRRRGRT) are compositionally biased toward basic residues. Residues 305–318 (DLIQGGLIGLLRGI) carry the Polymerase core binding motif. The H-T-H motif DNA-binding region spans 479–498 (WEDISRQFGLSRERVRQVGL).

The protein belongs to the sigma-70 factor family. In terms of tissue distribution, expressed in shoots. Expressed in the tips of fully elongated leaves. Expressed in leaf blades.

Its subcellular location is the plastid. The protein resides in the chloroplast. Functionally, sigma factors are initiation factors that promote the attachment of plastid-encoded RNA polymerase (PEP) to specific initiation sites and are then released. Controls the transcription of the psaA and psaB genes in chloroplast, and thus maintains the abundance of the core protein complex PsaA-PsaB of photosystem I (PSI) in the thylakoid membrane. Maintains PSI activity, sufficient rate of electron transfer from PSII to PSI, and photochemical efficiency. In Oryza sativa subsp. japonica (Rice), this protein is RNA polymerase sigma factor sigA.